A 77-amino-acid chain; its full sequence is Cell division topological specificity factor (77 aa).

This sequence belongs to the MinE family.

In terms of biological role, prevents the cell division inhibition by proteins MinC and MinD at internal division sites while permitting inhibition at polar sites. This ensures cell division at the proper site by restricting the formation of a division septum at the midpoint of the long axis of the cell. The polypeptide is Cell division topological specificity factor (Helicobacter pylori (strain HPAG1)).